We begin with the raw amino-acid sequence, 1384 residues long: DNA-directed RNA polymerase subunit beta' (1384 aa).

The Zn(2+) site is built by C81, C83, C96, and C99. Residues D472, D474, and D476 each coordinate Mg(2+).

This sequence belongs to the RNA polymerase beta' chain family. The RNAP catalytic core consists of 2 alpha, 1 beta, 1 beta' and 1 omega subunit. When a sigma factor is associated with the core the holoenzyme is formed, which can initiate transcription. It depends on Mg(2+) as a cofactor. Zn(2+) serves as cofactor.

The catalysed reaction is RNA(n) + a ribonucleoside 5'-triphosphate = RNA(n+1) + diphosphate. In terms of biological role, DNA-dependent RNA polymerase catalyzes the transcription of DNA into RNA using the four ribonucleoside triphosphates as substrates. This chain is DNA-directed RNA polymerase subunit beta', found in Opitutus terrae (strain DSM 11246 / JCM 15787 / PB90-1).